A 258-amino-acid chain; its full sequence is Mitochondrial distribution and morphology protein 12 (258 aa).

An SMP-LTD domain is found at 1 to 233 (MSFDIHWSNL…WPSWIELDFN (233 aa)). The segment at 238-258 (EDLQQSKDTPTTANTGTTTTN) is disordered. The segment covering 246 to 258 (TPTTANTGTTTTN) has biased composition (low complexity).

This sequence belongs to the MDM12 family. In terms of assembly, component of the ER-mitochondria encounter structure (ERMES) or MDM complex, composed of MMM1, MDM10, MDM12 and MDM34. An MMM1 homodimer associates with one molecule of MDM12 on each side in a pairwise head-to-tail manner, and the SMP-LTD domains of MMM1 and MDM12 generate a continuous hydrophobic tunnel for phospholipid trafficking.

The protein resides in the mitochondrion outer membrane. It is found in the endoplasmic reticulum membrane. Component of the ERMES/MDM complex, which serves as a molecular tether to connect the endoplasmic reticulum (ER) and mitochondria. Components of this complex are involved in the control of mitochondrial shape and protein biogenesis, and function in nonvesicular lipid trafficking between the ER and mitochondria. MDM12 is required for the interaction of the ER-resident membrane protein MMM1 and the outer mitochondrial membrane-resident beta-barrel protein MDM10. The MDM12-MMM1 subcomplex functions in the major beta-barrel assembly pathway that is responsible for biogenesis of all mitochondrial outer membrane beta-barrel proteins, and acts in a late step after the SAM complex. The MDM10-MDM12-MMM1 subcomplex further acts in the TOM40-specific pathway after the action of the MDM12-MMM1 complex. Essential for establishing and maintaining the structure of mitochondria and maintenance of mtDNA nucleoids. The polypeptide is Mitochondrial distribution and morphology protein 12 (Zygosaccharomyces rouxii (strain ATCC 2623 / CBS 732 / NBRC 1130 / NCYC 568 / NRRL Y-229)).